Here is a 759-residue protein sequence, read N- to C-terminus: Inhibitor of nuclear factor kappa-B kinase subunit alpha (759 aa).

The tract at residues 1-20 is disordered; sequence MERGAERGPPPAPGGVALRG. One can recognise a Protein kinase domain in the interval 29–316; the sequence is WEMRDRLGTG…PETNSPKCFL (288 aa). Residues 35–43 and Lys58 each bind ATP; that span reads LGTGGFGNV. The Proton acceptor role is filled by Asp158. The segment at 469–490 is leucine-zipper; it reads LLRYNANLIKMKNNMVSASQQL. Polar residues predominate over residues 691 to 703; the sequence is TPAATWVPQSSSE. Residues 691–715 form a disordered region; sequence TPAATWVPQSSSEYAPHPLSSMATP. Residues 753–758 are NEMO-binding; it reads FDWSWL.

It belongs to the protein kinase superfamily. Ser/Thr protein kinase family. I-kappa-B kinase subfamily.

It localises to the cytoplasm. It is found in the nucleus. It carries out the reaction L-seryl-[I-kappa-B protein] + ATP = O-phospho-L-seryl-[I-kappa-B protein] + ADP + H(+). With respect to regulation, activated when phosphorylated and inactivated when dephosphorylated. Phosphorylates inhibitors of NF-kappa-B thus leading to the dissociation of the inhibitor/NF-kappa-B complex and ultimately the degradation of the inhibitor. Phosphorylates 'Ser-10' of histone H3 at NF-kappa-B-regulated promoters during inflammatory responses triggered by cytokines. This chain is Inhibitor of nuclear factor kappa-B kinase subunit alpha (CHUK), found in Gallus gallus (Chicken).